The sequence spans 560 residues: Cytosolic purine 5'-nucleotidase (560 aa).

D52 acts as the Nucleophile in catalysis. Residues D52 and D54 each contribute to the IMP site. Residues D52 and D54 each contribute to the Mg(2+) site. The active-site Proton donor is the D54. Residues R144 and N154 each contribute to the ATP site. The IMP site is built by R202, D206, K215, T249, N250, S251, and K292. Residue D351 coordinates Mg(2+). S418 carries the phosphoserine modification. ATP is bound by residues Q453 and R456. Residues S502, S511, and S527 each carry the phosphoserine modification. A disordered region spans residues 541 to 560 (PQEITHCHDEDDDEEEEEEE). Residues 548–560 (HDEDDDEEEEEEE) are required for tetramer assembly. Positions 550–560 (EDDDEEEEEEE) are enriched in acidic residues.

It belongs to the 5'(3')-deoxyribonucleotidase family. Homotetramer. Mg(2+) is required as a cofactor.

The protein localises to the cytoplasm. The protein resides in the cytosol. The enzyme catalyses a ribonucleoside 5'-phosphate + H2O = a ribonucleoside + phosphate. It carries out the reaction a 2'-deoxyribonucleoside + a ribonucleoside 5'-phosphate = a ribonucleoside + a 2'-deoxyribonucleoside 5'-phosphate. It catalyses the reaction IMP + H2O = inosine + phosphate. The catalysed reaction is GMP + H2O = guanosine + phosphate. The enzyme catalyses dIMP + H2O = 2'-deoxyinosine + phosphate. It carries out the reaction dGMP + H2O = 2'-deoxyguanosine + phosphate. It catalyses the reaction XMP + H2O = xanthosine + phosphate. The catalysed reaction is inosine + GMP = guanosine + IMP. The enzyme catalyses dGMP + inosine = 2'-deoxyguanosine + IMP. It carries out the reaction dIMP + inosine = 2'-deoxyinosine + IMP. It catalyses the reaction inosine + UMP = uridine + IMP. The catalysed reaction is inosine + CMP = cytidine + IMP. The enzyme catalyses inosine + AMP = IMP + adenosine. With respect to regulation, allosterically activated by various compounds including ATP, 2,3-BPG/2,3-Bisphosphoglyceric acid and Ap4A/P1,P4-bis(5'-adenosyl) tetraphosphate. Binding of an allosteric activator is a prerequisiste to magnesium and substrate binding. Inhibited by inorganic phosphate. Broad specificity cytosolic 5'-nucleotidase that catalyzes the dephosphorylation of 6-hydroxypurine nucleoside 5'-monophosphates. In addition, possesses a phosphotransferase activity by which it can transfer a phosphate from a donor nucleoside monophosphate to an acceptor nucleoside, preferably inosine, deoxyinosine and guanosine. Has the highest activities for IMP and GMP followed by dIMP, dGMP and XMP. Could also catalyze the transfer of phosphates from pyrimidine monophosphates but with lower efficiency. Through these activities regulates the purine nucleoside/nucleotide pools within the cell. The polypeptide is Cytosolic purine 5'-nucleotidase (Rattus norvegicus (Rat)).